A 438-amino-acid polypeptide reads, in one-letter code: Probable glucose-6-phosphate isomerase (438 aa).

Glutamate 280 acts as the Proton donor in catalysis. Residues histidine 301 and lysine 410 contribute to the active site.

This sequence belongs to the GPI family.

The protein localises to the cytoplasm. The catalysed reaction is alpha-D-glucose 6-phosphate = beta-D-fructose 6-phosphate. The protein operates within carbohydrate biosynthesis; gluconeogenesis. It functions in the pathway carbohydrate degradation; glycolysis; D-glyceraldehyde 3-phosphate and glycerone phosphate from D-glucose: step 2/4. Catalyzes the reversible isomerization of glucose-6-phosphate to fructose-6-phosphate. The protein is Probable glucose-6-phosphate isomerase of Methanococcus maripaludis (strain DSM 14266 / JCM 13030 / NBRC 101832 / S2 / LL).